A 508-amino-acid chain; its full sequence is T-complex protein 1 subunit beta (508 aa).

This sequence belongs to the TCP-1 chaperonin family. As to quaternary structure, component of the T-complex protein 1 (TCP1) complex.

It localises to the cytoplasm. Molecular chaperone; assists the folding of proteins upon ATP hydrolysis. This chain is T-complex protein 1 subunit beta (CCT2), found in Encephalitozoon cuniculi (strain GB-M1) (Microsporidian parasite).